The following is a 624-amino-acid chain: Kelch-like ECH-associated protein 1 (624 aa).

S-(2-succinyl)cysteine is present on Cys-38. A BTB domain is found at 77–149; that stretch reads CDVTLQVKYQ…AYTASISMGE (73 aa). Arg-135 is covalently cross-linked (N5-[4-(S-L-cysteinyl)-5-methyl-1H-imidazol-2-yl]-L-ornithine (Arg-Cys) (interchain with C-151 in KEAP1)). Position 151 is an S-(2,3-dicarboxypropyl)cysteine; alternate (Cys-151). Cys-151 is subject to S-(2-succinyl)cysteine; alternate. The residue at position 151 (Cys-151) is an S-nitrosocysteine; alternate. Residue Cys-151 forms an N5-[4-(S-L-cysteinyl)-5-methyl-1H-imidazol-2-yl]-L-ornithine (Cys-Arg) (interchain with R-135 in KEAP1) linkage. The BACK domain maps to 184–286; that stretch reads AIGIANFAEQ…TPNFLQMQLQ (103 aa). Cys-241 is subject to S-(2-succinyl)cysteine. An S-(2,3-dicarboxypropyl)cysteine mark is found at Cys-257 and Cys-273. S-(2,3-dicarboxypropyl)cysteine; alternate is present on Cys-288. Cys-288 carries the S-(2-succinyl)cysteine; alternate modification. Cys-319 is subject to S-(2-succinyl)cysteine. 6 Kelch repeats span residues 327 to 372, 373 to 423, 424 to 470, 471 to 517, 518 to 564, and 565 to 611; these read LIYT…VVGG, LLYA…VIDG, HIYA…VLNR, LLYA…VLHN, CIYA…VHQG, and RIYV…VTME. Residue Cys-434 is modified to S-cGMP-cysteine. Residue Cys-613 is modified to S-(2-succinyl)cysteine.

This sequence belongs to the KEAP1 family. As to quaternary structure, component of the BCR(KEAP1) E3 ubiquitin ligase complex, at least composed of 2 molecules of CUL3, 2 molecules of KEAP1, and RBX1. Interacts with NFE2L2/NRF2; the interaction is direct. Forms a ternary complex with NFE2L2/NRF2 and PGAM5. Interacts with (phosphorylated) SQSTM1/p62; the interaction is direct and inactivates the BCR(KEAP1) complex by sequestering it in inclusion bodies, promoting its degradation. Interacts with NFE2L1. Interacts with BPTF and PTMA. Interacts with MAP1LC3B. Interacts indirectly with ENC1. Interacts with SESN1 and SESN2. Interacts with HSP90AA1 and HSP90AB1. Interacts with PGCKA1; this interaction prevents the ubiquitination of KEAP1 by TRIM25, thus protecting KEAP1 from degradation. In terms of assembly, (Microbial infection) Interacts with ebolavirus protein VP24; this interaction activates transcription factor NFE2L2/NRF2 by blocking its interaction with KEAP1. Post-translationally, non-enzymatic covalent modifications of reactive cysteines by electrophile metabolites inactivate the BCR(KEAP1) complex. Accumulation of fumarate promotes the formation of cysteine S-succination (S-(2-succinyl)cysteine), leading to inactivate the BCR(KEAP1) complex and promote NFE2L2/NRF2 nuclear accumulation and activation. Nitric oxide-dependent 8-Nitro-cGMP formation promotes cysteine guanylation (S-cGMP-cysteine), leading to NFE2L2/NRF2 nuclear accumulation and activation. Itaconate, an anti-inflammatory metabolite generated in response to lipopolysaccharide, alkylates cysteines, activating NFE2L2/NRF2. Methylglyoxal, a reactive metabolite that accumulates when the glycolytic enzyme PGK1 is inhibited, promotes formation of a methylimidazole cross-link between proximal Cys-151 and Arg-135 on another KEAP1 molecule, resulting in an inactive dimer that inactivates the BCR(KEAP1) complex. In terms of processing, degraded via a proteasomal-independent process during selective autophagy: interaction with phosphorylated SQSTM1/p62 sequesters KEAP1 in inclusion bodies, leading to its degradation. Auto-ubiquitinated by the BCR(KEAP1) complex. Quinone-induced oxidative stress, but not sulforaphane, increases its ubiquitination. Ubiquitination and subsequent degradation is most pronounced following prolonged exposure of cells to oxidative stress, particularly in glutathione-deficient cells that are highly susceptible to oxidative stress. Deubiquitinated by USP25; leading to stabilization. Ubiquitinated by TRIM25; leading to degradation upon ER stress. Broadly expressed, with highest levels in skeletal muscle.

It is found in the cytoplasm. The protein resides in the nucleus. It functions in the pathway protein modification; protein ubiquitination. With respect to regulation, ubiquitin ligase activity of the BCR(KEAP1) complex is inhibited by oxidative stress and electrophile metabolites such as sulforaphane. Electrophile metabolites react with reactive cysteine residues in KEAP1 and trigger non-enzymatic covalent modifications of these cysteine residues, leading to inactivate the ubiquitin ligase activity of the BCR(KEAP1) complex. Selective autophagy also inactivates the BCR(KEAP1) complex via interaction between KEAP1 and SQSTM1/p62, which sequesters the complex in inclusion bodies and promotes its degradation. In terms of biological role, substrate-specific adapter of a BCR (BTB-CUL3-RBX1) E3 ubiquitin ligase complex that regulates the response to oxidative stress by targeting NFE2L2/NRF2 for ubiquitination. KEAP1 acts as a key sensor of oxidative and electrophilic stress: in normal conditions, the BCR(KEAP1) complex mediates ubiquitination and degradation of NFE2L2/NRF2, a transcription factor regulating expression of many cytoprotective genes. In response to oxidative stress, different electrophile metabolites trigger non-enzymatic covalent modifications of highly reactive cysteine residues in KEAP1, leading to inactivate the ubiquitin ligase activity of the BCR(KEAP1) complex, promoting NFE2L2/NRF2 nuclear accumulation and expression of phase II detoxifying enzymes. In response to selective autophagy, KEAP1 is sequestered in inclusion bodies following its interaction with SQSTM1/p62, leading to inactivation of the BCR(KEAP1) complex and activation of NFE2L2/NRF2. The BCR(KEAP1) complex also mediates ubiquitination of SQSTM1/p62, increasing SQSTM1/p62 sequestering activity and degradation. The BCR(KEAP1) complex also targets BPTF and PGAM5 for ubiquitination and degradation by the proteasome. The protein is Kelch-like ECH-associated protein 1 of Homo sapiens (Human).